Consider the following 477-residue polypeptide: MSTVLYRCPELLIGGEWRPGRHEQRLVVRNPATGEPLDELRLASADDLQLALQTTQQAFEHWRQVPAHERCARLERGVARLRENTERIAHLLTLEQGKTLAEARMECAMAADLIKWYAEEARRVYGRVIPARLPNSRMEVFKFPVGPVAAFSPWNFPLVLSARKLGGAIAAGCSIVLKAAEETPASVAAMVDCLNQELPPGVVQLLYGVPAEVSQALIASPVVRKVTFTGSVPVGRHLAELSARHLKRITLELGGHAPVIVCGDADIARTVNLMVQHKFRNAGQACLAPTRFFVDRRIYGDFVDAFGAATQALRVGAGMAAETQMGPVASARRQAAVQDLIARSVAAGARPVASAVPEAGYFVAPTLLADVPLDAPVMSEEPFGPVACAVPFDSLDQAIAQANHNPYGLAGYLFTDSAKAILAVSERLEVGSLAVNGMGVSVPEAPFGGVKDSGYGSESGTEGMEAFLDTKFMHYVA.

NAD(+)-binding positions include 154–155 (WN), 178–181 (KAAE), and 230–231 (GS). Glutamate 252 acts as the Proton acceptor in catalysis. Leucine 253 serves as a coordination point for NAD(+). Residue cysteine 286 is the Nucleophile of the active site. Glutamate 381 contacts NAD(+).

The protein belongs to the aldehyde dehydrogenase family. As to quaternary structure, homodimer.

It carries out the reaction 4-(hydroxymethyl)benzenesulfonate + NAD(+) = 4-formylbenzenesulfonate + NADH + H(+). Functionally, involved in the toluene-4-sulfonate degradation pathway. Does not discriminate between the sulfonate and the carboxyl substituents and can also be involved in the p-toluenecarboxylate degradation pathway. This Comamonas testosteroni (Pseudomonas testosteroni) protein is Putative 4-(hydroxymethyl)benzenesulfonate dehydrogenase TsaD2 (tsaD2).